Reading from the N-terminus, the 323-residue chain is Aspartate carbamoyltransferase catalytic subunit (323 aa).

Carbamoyl phosphate contacts are provided by arginine 71 and threonine 72. Residue lysine 99 participates in L-aspartate binding. Carbamoyl phosphate contacts are provided by arginine 121, histidine 151, and glutamine 154. Positions 184 and 239 each coordinate L-aspartate. Carbamoyl phosphate is bound by residues glycine 280 and proline 281.

It belongs to the aspartate/ornithine carbamoyltransferase superfamily. ATCase family. In terms of assembly, heterododecamer (2C3:3R2) of six catalytic PyrB chains organized as two trimers (C3), and six regulatory PyrI chains organized as three dimers (R2).

The enzyme catalyses carbamoyl phosphate + L-aspartate = N-carbamoyl-L-aspartate + phosphate + H(+). The protein operates within pyrimidine metabolism; UMP biosynthesis via de novo pathway; (S)-dihydroorotate from bicarbonate: step 2/3. Catalyzes the condensation of carbamoyl phosphate and aspartate to form carbamoyl aspartate and inorganic phosphate, the committed step in the de novo pyrimidine nucleotide biosynthesis pathway. This is Aspartate carbamoyltransferase catalytic subunit from Cupriavidus metallidurans (strain ATCC 43123 / DSM 2839 / NBRC 102507 / CH34) (Ralstonia metallidurans).